An 87-amino-acid chain; its full sequence is Large ribosomal subunit protein bL27 (87 aa).

Residues methionine 1 to lysine 24 are disordered.

The protein belongs to the bacterial ribosomal protein bL27 family.

The chain is Large ribosomal subunit protein bL27 from Rickettsia massiliae (strain Mtu5).